Reading from the N-terminus, the 287-residue chain is Oxaloacetate decarboxylase (287 aa).

Substrate is bound at residue S50. Mg(2+) is bound at residue D88. Substrate-binding residues include R159 and H235.

Belongs to the isocitrate lyase/PEP mutase superfamily. Oxaloacetate decarboxylase family. As to quaternary structure, homotetramer; dimer of dimers. Mg(2+) serves as cofactor.

It catalyses the reaction oxaloacetate + H(+) = pyruvate + CO2. Its function is as follows. Catalyzes the decarboxylation of oxaloacetate into pyruvate. Seems to play a role in maintaining cellular concentrations of bicarbonate and pyruvate. The polypeptide is Oxaloacetate decarboxylase (Pseudomonas paraeruginosa (strain DSM 24068 / PA7) (Pseudomonas aeruginosa (strain PA7))).